A 92-amino-acid polypeptide reads, in one-letter code: Small ribosomal subunit protein bS18 (92 aa).

It belongs to the bacterial ribosomal protein bS18 family. Part of the 30S ribosomal subunit. Forms a tight heterodimer with protein bS6.

Binds as a heterodimer with protein bS6 to the central domain of the 16S rRNA, where it helps stabilize the platform of the 30S subunit. In Pelagibacter ubique (strain HTCC1062), this protein is Small ribosomal subunit protein bS18.